Reading from the N-terminus, the 566-residue chain is MSDEKNYGISLAAPARPDLGSRTASQLEKATASHVEFATPKDPGALHDATLMAGERTEKLTKFVVGLALFASVSGFCFGFDTGVISAALVSIKDDFGHILDDTEKEWISAATSCGALVGALSSGALADRVGRKWTLAVGDVWFTLGAIIICSSFSVVQMIVGRAVLGLGVGTAAAIAPLYIAEVAPTRFRGALVTVQSIAITGGQFFSYCIGIPLTGHNGWRIQFAIGIVPAVVQAAVVHFLPESPRYDLLRGQREAALATIHRSYKGMSEDYIAVKFAALEEVVGISADFNRGHTLGQKMRLVLTEGKYRKPAITALGIGIFQQLCGFNSLMYYAATIFSYAGFDNPTSVGLIVSGTNWFFTFVAMMILDRVGKRRILLSTYPGMIAGLALASVAFWKMTGSTGHRLVEGTEYPQQWSNMMLGMMVVFIAFYATGSGNITWTVGEMFPLEMRGIGASILAGGVWAANIVISATFLTLMNAIGPTPTFALYAGICLAGLIFIYFCYPEPSGLSLEEIQIIYNYGFGVQKSREIRAEHKLKAQEMRDRANSHIGGSATASDDQLNKV.

The Cytoplasmic portion of the chain corresponds to 1–64 (MSDEKNYGIS…ERTEKLTKFV (64 aa)). Residues 65-85 (VGLALFASVSGFCFGFDTGVI) traverse the membrane as a helical segment. At 86 to 106 (SAALVSIKDDFGHILDDTEKE) the chain is on the extracellular side. The helical transmembrane segment at 107–127 (WISAATSCGALVGALSSGALA) threads the bilayer. Over 128–140 (DRVGRKWTLAVGD) the chain is Cytoplasmic. A helical membrane pass occupies residues 141–161 (VWFTLGAIIICSSFSVVQMIV). Residues 162–163 (GR) lie on the Extracellular side of the membrane. The helical transmembrane segment at 164–184 (AVLGLGVGTAAAIAPLYIAEV) threads the bilayer. Topologically, residues 185-192 (APTRFRGA) are cytoplasmic. Residues 193 to 213 (LVTVQSIAITGGQFFSYCIGI) traverse the membrane as a helical segment. Over 214–222 (PLTGHNGWR) the chain is Extracellular. Residues 223 to 243 (IQFAIGIVPAVVQAAVVHFLP) form a helical membrane-spanning segment. Residues 244–313 (ESPRYDLLRG…VLTEGKYRKP (70 aa)) lie on the Cytoplasmic side of the membrane. Residues 314-334 (AITALGIGIFQQLCGFNSLMY) form a helical membrane-spanning segment. Residues 335–349 (YAATIFSYAGFDNPT) lie on the Extracellular side of the membrane. The helical transmembrane segment at 350 to 370 (SVGLIVSGTNWFFTFVAMMIL) threads the bilayer. Topologically, residues 371 to 377 (DRVGKRR) are cytoplasmic. A helical membrane pass occupies residues 378–398 (ILLSTYPGMIAGLALASVAFW). The Extracellular portion of the chain corresponds to 399 to 421 (KMTGSTGHRLVEGTEYPQQWSNM). Residues 422 to 442 (MLGMMVVFIAFYATGSGNITW) traverse the membrane as a helical segment. The Cytoplasmic portion of the chain corresponds to 443-458 (TVGEMFPLEMRGIGAS). The chain crosses the membrane as a helical span at residues 459 to 479 (ILAGGVWAANIVISATFLTLM). Residues 480–485 (NAIGPT) are Extracellular-facing. Residues 486-506 (PTFALYAGICLAGLIFIYFCY) form a helical membrane-spanning segment. Topologically, residues 507–566 (PEPSGLSLEEIQIIYNYGFGVQKSREIRAEHKLKAQEMRDRANSHIGGSATASDDQLNKV) are cytoplasmic. Residues 546 to 566 (DRANSHIGGSATASDDQLNKV) are disordered. Polar residues predominate over residues 556 to 566 (ATASDDQLNKV).

It belongs to the major facilitator superfamily. Sugar transporter (TC 2.A.1.1) family.

Its subcellular location is the cell membrane. It catalyses the reaction myo-inositol(out) + H(+)(out) = myo-inositol(in) + H(+)(in). Functionally, major transporter for myo-inositol. Plays a role in the traversal of the host blood-brain barrier. In Cryptococcus neoformans var. grubii serotype A (strain H99 / ATCC 208821 / CBS 10515 / FGSC 9487) (Filobasidiella neoformans var. grubii), this protein is Myo-inositol transporter 1A.